Reading from the N-terminus, the 141-residue chain is Hemoglobin subunit alpha-D (141 aa).

Positions 1-141 (VLTAEDRRLL…VADVLSEKYR (141 aa)) constitute a Globin domain. Heme b contacts are provided by histidine 57 and histidine 87.

Belongs to the globin family. In terms of assembly, the deoxy-Hb is a heterotetramer of two alpha and two beta chains, but oxygenation results in dissociation to dimers. In terms of tissue distribution, red blood cells.

Its function is as follows. Involved in oxygen transport from the lung to the various peripheral tissues. The polypeptide is Hemoglobin subunit alpha-D (HBAD) (Erythrolamprus miliaris (South American water snake)).